Here is a 258-residue protein sequence, read N- to C-terminus: MSATAPFKTLSAKAAFQLDQELMSTGEFSIDQLMELAGLAVAKTIYKEYPPNEATTTTKNKFNPNKVLVLVGPGNNGGDGLVAARHLKLWNYDPIIYYPKRPASNQLYSRLIKQLQDLNVPELTTLTEVKHLLDSRDSKIKIIIDSIFGFSFKPPIREPFKDLINYLGQNHDHLPPIVSVDIPSGWDVDEGPGTEIDIQASCLISLTAPKPCAKLFVNSGPDKIHYLGGRFINPRIAKEYGIEDIVNKYQGDELIVKL.

The YjeF N-terminal domain maps to Ala15 to Asp244. Asn75–Asp79 is a (6S)-NADPHX binding site. K(+) contacts are provided by Asn76 and Asp145. Residues Gly149–Pro155 and Asp181 each bind (6S)-NADPHX. A K(+)-binding site is contributed by Ser184.

It belongs to the NnrE/AIBP family. The cofactor is K(+).

It localises to the cytoplasm. Its subcellular location is the mitochondrion. The catalysed reaction is (6R)-NADHX = (6S)-NADHX. It carries out the reaction (6R)-NADPHX = (6S)-NADPHX. In terms of biological role, catalyzes the epimerization of the S- and R-forms of NAD(P)HX, a damaged form of NAD(P)H that is a result of enzymatic or heat-dependent hydration. This is a prerequisite for the S-specific NAD(P)H-hydrate dehydratase to allow the repair of both epimers of NAD(P)HX. This chain is NAD(P)H-hydrate epimerase, found in Candida albicans (strain SC5314 / ATCC MYA-2876) (Yeast).